The primary structure comprises 363 residues: Succinyl-diaminopimelate desuccinylase (363 aa).

Histidine 63 serves as a coordination point for Zn(2+). Aspartate 65 is an active-site residue. Zn(2+) is bound at residue aspartate 94. Glutamate 123 serves as the catalytic Proton acceptor. Positions 124, 152, and 337 each coordinate Zn(2+).

Belongs to the peptidase M20A family. DapE subfamily. Homodimer. Zn(2+) is required as a cofactor. The cofactor is Co(2+).

The enzyme catalyses N-succinyl-(2S,6S)-2,6-diaminopimelate + H2O = (2S,6S)-2,6-diaminopimelate + succinate. Its pathway is amino-acid biosynthesis; L-lysine biosynthesis via DAP pathway; LL-2,6-diaminopimelate from (S)-tetrahydrodipicolinate (succinylase route): step 3/3. Catalyzes the hydrolysis of N-succinyl-L,L-diaminopimelic acid (SDAP), forming succinate and LL-2,6-diaminopimelate (DAP), an intermediate involved in the bacterial biosynthesis of lysine and meso-diaminopimelic acid, an essential component of bacterial cell walls. The protein is Succinyl-diaminopimelate desuccinylase of Campylobacter concisus (strain 13826).